Here is a 137-residue protein sequence, read N- to C-terminus: MSAERTLILVKPDGVSRGLVGEVVGRLERKGLTLVALELRTLERSVAETHYGEHASKPFFGELVDFIVSGPLVALVAEGPRAVEASRGLIGATDPVKAAPGSLRGDYALEIGQNLVHGSDSPESAKREIDLFFPGLS.

Positions 11, 59, 87, 93, 104, and 114 each coordinate ATP. His-117 serves as the catalytic Pros-phosphohistidine intermediate.

Belongs to the NDK family. As to quaternary structure, homotetramer. Requires Mg(2+) as cofactor.

The protein resides in the cytoplasm. The catalysed reaction is a 2'-deoxyribonucleoside 5'-diphosphate + ATP = a 2'-deoxyribonucleoside 5'-triphosphate + ADP. It catalyses the reaction a ribonucleoside 5'-diphosphate + ATP = a ribonucleoside 5'-triphosphate + ADP. Its function is as follows. Major role in the synthesis of nucleoside triphosphates other than ATP. The ATP gamma phosphate is transferred to the NDP beta phosphate via a ping-pong mechanism, using a phosphorylated active-site intermediate. The protein is Nucleoside diphosphate kinase of Frankia alni (strain DSM 45986 / CECT 9034 / ACN14a).